Consider the following 216-residue polypeptide: Cytidylate kinase (216 aa).

An ATP-binding site is contributed by 11 to 19 (GPAGAGKGT).

This sequence belongs to the cytidylate kinase family. Type 1 subfamily.

It localises to the cytoplasm. It carries out the reaction CMP + ATP = CDP + ADP. The catalysed reaction is dCMP + ATP = dCDP + ADP. The polypeptide is Cytidylate kinase (Mesorhizobium japonicum (strain LMG 29417 / CECT 9101 / MAFF 303099) (Mesorhizobium loti (strain MAFF 303099))).